The primary structure comprises 441 residues: tRNA modification GTPase MnmE (441 aa).

3 residues coordinate (6S)-5-formyl-5,6,7,8-tetrahydrofolate: Arg21, Glu78, and Lys117. A TrmE-type G domain is found at 211–363 (GIVMTIVGKP…LENKIVSKVK (153 aa)). Asn221 lines the K(+) pocket. GTP-binding positions include 221–226 (NSGKST), 240–246 (TDIPGTT), and 265–268 (DTAG). Ser225 is a Mg(2+) binding site. Residues Thr240, Ile242, and Thr245 each contribute to the K(+) site. Mg(2+) is bound at residue Thr246. Position 441 (Lys441) interacts with (6S)-5-formyl-5,6,7,8-tetrahydrofolate.

This sequence belongs to the TRAFAC class TrmE-Era-EngA-EngB-Septin-like GTPase superfamily. TrmE GTPase family. In terms of assembly, homodimer. Heterotetramer of two MnmE and two MnmG subunits. K(+) is required as a cofactor.

The protein resides in the cytoplasm. Exhibits a very high intrinsic GTPase hydrolysis rate. Involved in the addition of a carboxymethylaminomethyl (cmnm) group at the wobble position (U34) of certain tRNAs, forming tRNA-cmnm(5)s(2)U34. This Thermosipho melanesiensis (strain DSM 12029 / CIP 104789 / BI429) protein is tRNA modification GTPase MnmE.